The chain runs to 99 residues: Plastocyanin (99 aa).

Residues 1-99 (IEILLGGDDG…AGMVGKVTVN (99 aa)) enclose the Plastocyanin-like domain. Residues His-37, Cys-84, His-87, and Met-92 each contribute to the Cu cation site.

It belongs to the plastocyanin family. Cu(2+) serves as cofactor.

It localises to the plastid. It is found in the chloroplast thylakoid membrane. Participates in electron transfer between P700 and the cytochrome b6-f complex in photosystem I. This chain is Plastocyanin (PETE), found in Cucumis sativus (Cucumber).